The chain runs to 776 residues: Protein translocase subunit SecA 2 (776 aa).

ATP-binding positions include glutamine 80, 98 to 102, and aspartate 486; that span reads GEGKT.

The protein belongs to the SecA family. In terms of assembly, monomer and homodimer. Part of the essential Sec protein translocation apparatus which comprises SecA, SecYEG and auxiliary proteins SecDF. Other proteins may also be involved.

It is found in the cell membrane. It localises to the cytoplasm. The catalysed reaction is ATP + H2O + cellular proteinSide 1 = ADP + phosphate + cellular proteinSide 2.. In terms of biological role, part of the Sec protein translocase complex. Interacts with the SecYEG preprotein conducting channel. Has a central role in coupling the hydrolysis of ATP to the transfer of proteins into and across the cell membrane, serving as an ATP-driven molecular motor driving the stepwise translocation of polypeptide chains across the membrane. In Listeria innocua serovar 6a (strain ATCC BAA-680 / CLIP 11262), this protein is Protein translocase subunit SecA 2.